The sequence spans 40 residues: Photosystem II reaction center protein J (40 aa).

A helical membrane pass occupies residues 8-28 (IPLWIVGTVTGILVIGLIGVF).

The protein belongs to the PsbJ family. As to quaternary structure, PSII is composed of 1 copy each of membrane proteins PsbA, PsbB, PsbC, PsbD, PsbE, PsbF, PsbH, PsbI, PsbJ, PsbK, PsbL, PsbM, PsbT, PsbX, PsbY, PsbZ, Psb30/Ycf12, at least 3 peripheral proteins of the oxygen-evolving complex and a large number of cofactors. It forms dimeric complexes.

The protein localises to the plastid. It is found in the chloroplast thylakoid membrane. Its function is as follows. One of the components of the core complex of photosystem II (PSII). PSII is a light-driven water:plastoquinone oxidoreductase that uses light energy to abstract electrons from H(2)O, generating O(2) and a proton gradient subsequently used for ATP formation. It consists of a core antenna complex that captures photons, and an electron transfer chain that converts photonic excitation into a charge separation. The sequence is that of Photosystem II reaction center protein J from Coffea arabica (Arabian coffee).